Here is a 129-residue protein sequence, read N- to C-terminus: UPF0102 protein Cag_1992 (129 aa).

Belongs to the UPF0102 family.

In Chlorobium chlorochromatii (strain CaD3), this protein is UPF0102 protein Cag_1992.